A 331-amino-acid polypeptide reads, in one-letter code: 6-phosphogluconolactonase (331 aa).

An N6-acetyllysine modification is found at Lys-287.

This sequence belongs to the cycloisomerase 2 family.

The enzyme catalyses 6-phospho-D-glucono-1,5-lactone + H2O = 6-phospho-D-gluconate + H(+). Its pathway is carbohydrate degradation; pentose phosphate pathway; D-ribulose 5-phosphate from D-glucose 6-phosphate (oxidative stage): step 2/3. Its function is as follows. Catalyzes the hydrolysis of 6-phosphogluconolactone to 6-phosphogluconate. The protein is 6-phosphogluconolactonase of Escherichia coli (strain SMS-3-5 / SECEC).